The sequence spans 131 residues: Leptin receptor gene-related protein (131 aa).

Transmembrane regions (helical) follow at residues 7 to 27, 32 to 52, 69 to 89, and 100 to 120; these read LVGL…GCAL, VYWP…HFIA, LAYF…IILA, and GLVL…FLVF.

The protein belongs to the OB-RGRP/VPS55 family.

The protein localises to the golgi apparatus membrane. It is found in the endosome membrane. Involved in protein trafficking. May be involved in the down-regulation of membrane protein levels. This Gallus gallus (Chicken) protein is Leptin receptor gene-related protein (LEPROT).